The following is a 569-amino-acid chain: Rab GTPase-binding effector protein 2 (569 aa).

Disordered stretches follow at residues 1–41 (MAAA…GELS), 180–265 (IQRR…ETAS), and 388–411 (RAEQ…ESLP). A2 is subject to N-acetylalanine. Residues 34–187 (EAESGELSRL…QEIQRRPRHA (154 aa)) are a coiled coil. S189 and S193 each carry phosphoserine. At S200 the chain carries Phosphoserine; by GSK3-alpha. Position 204 is a phosphoserine (S204). Low complexity-rich tracts occupy residues 245–257 (SSSS…QGLS) and 393–403 (PSSAPQGSQQE). The stretch at 289 to 523 (DTQWEQLQTE…LQAELETSEQ (235 aa)) forms a coiled coil.

This sequence belongs to the rabaptin family. Heterodimer with RABGEF1. The dimer binds RAB5A that has been activated by GTP-binding. Interacts with SDCCAG8; this interaction is important for ciliogenesis regulation. Interacts with RAB4A; this interaction may mediate VEGFR2 cell surface expression.

The protein localises to the cytoplasm. Its subcellular location is the early endosome. It localises to the cytoskeleton. The protein resides in the microtubule organizing center. It is found in the centrosome. The protein localises to the cilium basal body. Plays a role in membrane trafficking and in homotypic early endosome fusion. Participates in arteriogenesis by regulating vascular endothelial growth factor receptor 2/VEGFR2 cell surface expression and endosomal trafficking. By interacting with SDCCAG8, localizes to centrosomes and plays a critical role in ciliogenesis. In Homo sapiens (Human), this protein is Rab GTPase-binding effector protein 2 (RABEP2).